The sequence spans 370 residues: Histidinol-phosphate aminotransferase (370 aa).

K231 is subject to N6-(pyridoxal phosphate)lysine.

The protein belongs to the class-II pyridoxal-phosphate-dependent aminotransferase family. Histidinol-phosphate aminotransferase subfamily. In terms of assembly, homodimer. The cofactor is pyridoxal 5'-phosphate.

The enzyme catalyses L-histidinol phosphate + 2-oxoglutarate = 3-(imidazol-4-yl)-2-oxopropyl phosphate + L-glutamate. It functions in the pathway amino-acid biosynthesis; L-histidine biosynthesis; L-histidine from 5-phospho-alpha-D-ribose 1-diphosphate: step 7/9. This is Histidinol-phosphate aminotransferase from Paracidovorax citrulli (strain AAC00-1) (Acidovorax citrulli).